Consider the following 663-residue polypeptide: Oxytetracycline resistance protein (663 aa).

Residues 1 to 252 enclose the tr-type G domain; the sequence is MNKLNLGILA…GIRELLPSVH (252 aa). Residues 10–17, 74–78, and 128–131 each bind GTP; these read AHVDAGKT, DTPGH, and NKID.

It belongs to the TRAFAC class translation factor GTPase superfamily. Classic translation factor GTPase family. TetM/TetO subfamily.

In terms of biological role, abolishes the inhibitory effect of oxytetracycline on protein synthesis by a non-covalent modification of the ribosomes. The sequence is that of Oxytetracycline resistance protein (otrA) from Streptomyces rimosus.